The following is a 96-amino-acid chain: Small ribosomal subunit protein bS6 (96 aa).

Belongs to the bacterial ribosomal protein bS6 family.

Functionally, binds together with bS18 to 16S ribosomal RNA. This is Small ribosomal subunit protein bS6 (rpsF) from Mycobacterium bovis (strain ATCC BAA-935 / AF2122/97).